A 677-amino-acid chain; its full sequence is Methionine--tRNA ligase (677 aa).

The 'HIGH' region signature appears at 15-25 (PYANGSIHLGH). Zn(2+) contacts are provided by cysteine 146, cysteine 149, cysteine 159, and cysteine 162. The 'KMSKS' region motif lies at 333–337 (KMSKS). Lysine 336 is an ATP binding site. Positions 575–677 (DFAKVDLRVA…AGAKPGHQVK (103 aa)) constitute a tRNA-binding domain.

This sequence belongs to the class-I aminoacyl-tRNA synthetase family. MetG type 1 subfamily. In terms of assembly, homodimer. Zn(2+) is required as a cofactor.

It is found in the cytoplasm. It carries out the reaction tRNA(Met) + L-methionine + ATP = L-methionyl-tRNA(Met) + AMP + diphosphate. Functionally, is required not only for elongation of protein synthesis but also for the initiation of all mRNA translation through initiator tRNA(fMet) aminoacylation. In Escherichia coli (strain K12), this protein is Methionine--tRNA ligase (metG).